A 356-amino-acid chain; its full sequence is 3-dehydroquinate synthase (356 aa).

NAD(+)-binding positions include 106 to 110, 130 to 131, lysine 143, and lysine 152; these read GVVGD and TT. Residues glutamate 185, histidine 248, and histidine 265 each coordinate Zn(2+).

Belongs to the sugar phosphate cyclases superfamily. Dehydroquinate synthase family. NAD(+) is required as a cofactor. It depends on Co(2+) as a cofactor. Zn(2+) serves as cofactor.

It localises to the cytoplasm. It carries out the reaction 7-phospho-2-dehydro-3-deoxy-D-arabino-heptonate = 3-dehydroquinate + phosphate. The protein operates within metabolic intermediate biosynthesis; chorismate biosynthesis; chorismate from D-erythrose 4-phosphate and phosphoenolpyruvate: step 2/7. Functionally, catalyzes the conversion of 3-deoxy-D-arabino-heptulosonate 7-phosphate (DAHP) to dehydroquinate (DHQ). In Caldanaerobacter subterraneus subsp. tengcongensis (strain DSM 15242 / JCM 11007 / NBRC 100824 / MB4) (Thermoanaerobacter tengcongensis), this protein is 3-dehydroquinate synthase.